The following is a 108-amino-acid chain: Succinate dehydrogenase assembly factor 4, mitochondrial (108 aa).

A mitochondrion-targeting transit peptide spans 1–20; the sequence is MTPSRLPWLLSWVSATAWRA. Residues 31 to 108 are disordered; the sequence is RKTSSSQGGK…WERKGRCIDF (78 aa). Composition is skewed to basic and acidic residues over residues 52-87 and 95-108; these read KLPEGRFDAPEDSHLEKEPLEKFPDDVNPVTKEKGG and RYGDWERKGRCIDF.

The protein belongs to the SDHAF4 family. Interacts with SDHA in its FAD-bound form.

The protein localises to the mitochondrion matrix. Its function is as follows. Plays an essential role in the assembly of succinate dehydrogenase (SDH), an enzyme complex (also referred to as respiratory complex II) that is a component of both the tricarboxylic acid (TCA) cycle and the mitochondrial electron transport chain, and which couples the oxidation of succinate to fumarate with the reduction of ubiquinone (coenzyme Q) to ubiquinol. Binds to the flavoprotein subunit SDHA in its FAD-bound form, blocking the generation of excess reactive oxygen species (ROS) and facilitating its assembly with the iron-sulfur protein subunit SDHB into the SDH catalytic dimer. This Homo sapiens (Human) protein is Succinate dehydrogenase assembly factor 4, mitochondrial.